A 596-amino-acid chain; its full sequence is Interleukin-1 receptor-associated kinase 3 (596 aa).

In terms of domain architecture, Death spans 41-106 (WRGLAERLSS…RAIHLITNYG (66 aa)). At serine 110 the chain carries Phosphoserine; by IRAK1. Residues 165-452 (FHKDFLIGEG…LESTQASLYF (288 aa)) enclose the Protein kinase domain. ATP contacts are provided by residues 171–179 (IGEGEIFEV), lysine 192, 295–298 (SSAN), and aspartate 311. Phosphoserine is present on serine 467. The interval 560 to 596 (NIDPSSEAPGHSCRSRPVESSCSSKFSWDEYEQYKKE) is disordered.

Belongs to the protein kinase superfamily. TKL Ser/Thr protein kinase family. Pelle subfamily. In terms of assembly, monomer. Homodimer; disulfide-linked. May interact with IRAK4 (when phosphorylated). Interacts (when phosphorylated at Ser-110) with PIN1 (via WW domain) in response to IL33-mediated (but not TLR4 ligand LPS) dendritic cell stimulation. Expressed in eosinophils, dendritic cells and/or monocytes (at protein level). Expressed predominantly in peripheral blood lymphocytes.

It localises to the cytoplasm. Its subcellular location is the nucleus. Its function is as follows. Putative inactive protein kinase which regulates signaling downstream of immune receptors including IL1R and Toll-like receptors. Inhibits dissociation of IRAK1 and IRAK4 from the Toll-like receptor signaling complex by either inhibiting the phosphorylation of IRAK1 and IRAK4 or stabilizing the receptor complex. Upon IL33-induced lung inflammation, positively regulates expression of IL6, CSF3, CXCL2 and CCL5 mRNAs in dendritic cells. This Homo sapiens (Human) protein is Interleukin-1 receptor-associated kinase 3.